A 298-amino-acid chain; its full sequence is Glycine--tRNA ligase alpha subunit (298 aa).

Belongs to the class-II aminoacyl-tRNA synthetase family. As to quaternary structure, tetramer of two alpha and two beta subunits.

Its subcellular location is the cytoplasm. It catalyses the reaction tRNA(Gly) + glycine + ATP = glycyl-tRNA(Gly) + AMP + diphosphate. This is Glycine--tRNA ligase alpha subunit from Gloeothece citriformis (strain PCC 7424) (Cyanothece sp. (strain PCC 7424)).